The chain runs to 308 residues: Protoheme IX farnesyltransferase (308 aa).

8 consecutive transmembrane segments (helical) span residues 31-51 (VIEL…RGTV), 53-73 (PLLI…ANAL), 102-122 (NALV…WWTT), 124-144 (LLSG…YTLL), 149-169 (TSQN…IGWS), 170-190 (AVTG…FFWT), 240-260 (LALA…VWFL), and 288-308 (YLAV…PHLF).

It belongs to the UbiA prenyltransferase family. Protoheme IX farnesyltransferase subfamily.

It is found in the cell membrane. It catalyses the reaction heme b + (2E,6E)-farnesyl diphosphate + H2O = Fe(II)-heme o + diphosphate. Its pathway is porphyrin-containing compound metabolism; heme O biosynthesis; heme O from protoheme: step 1/1. Converts heme B (protoheme IX) to heme O by substitution of the vinyl group on carbon 2 of heme B porphyrin ring with a hydroxyethyl farnesyl side group. In Mycolicibacterium paratuberculosis (strain ATCC BAA-968 / K-10) (Mycobacterium paratuberculosis), this protein is Protoheme IX farnesyltransferase.